A 276-amino-acid chain; its full sequence is Membrane protein insertase YidC 2 (276 aa).

Positions 1 to 22 (MGVKKKLKLTSLLGLSLLIMTA) are cleaved as a signal peptide. Residue Cys-23 is the site of N-palmitoyl cysteine attachment. Cys-23 carries the S-diacylglycerol cysteine lipid modification. A run of 4 helical transmembrane segments spans residues 58–78 (ISIGVGIILFTVLIRTVLLPV), 130–150 (SDSLWPILIQMPVILALFQAL), 169–189 (VDTTLVLPILAAVFTFLSTWL), and 207–227 (GIPVLIFIFAVYAPGGVALYW).

It belongs to the OXA1/ALB3/YidC family. Type 2 subfamily. As to quaternary structure, interacts with KhpB (also called EloR/Jag).

It is found in the cell membrane. Required for the insertion and/or proper folding and/or complex formation of integral membrane proteins into the membrane. Involved in integration of membrane proteins that insert both dependently and independently of the Sec translocase complex, as well as at least some lipoproteins. The protein is Membrane protein insertase YidC 2 of Streptococcus pneumoniae (strain ATCC BAA-255 / R6).